The following is a 347-amino-acid chain: Dihydroorotase (347 aa).

2 residues coordinate Zn(2+): H17 and H19. Substrate contacts are provided by residues 19–21 and N45; that span reads HLR. 3 residues coordinate Zn(2+): K103, H140, and H178. At K103 the chain carries N6-carboxylysine. H140 serves as a coordination point for substrate. L223 contacts substrate. Zn(2+) is bound at residue D251. The active site involves D251. Residues H255 and A267 each coordinate substrate.

It belongs to the metallo-dependent hydrolases superfamily. DHOase family. Class II DHOase subfamily. Homodimer. Zn(2+) is required as a cofactor.

The catalysed reaction is (S)-dihydroorotate + H2O = N-carbamoyl-L-aspartate + H(+). Its pathway is pyrimidine metabolism; UMP biosynthesis via de novo pathway; (S)-dihydroorotate from bicarbonate: step 3/3. In terms of biological role, catalyzes the reversible cyclization of carbamoyl aspartate to dihydroorotate. The sequence is that of Dihydroorotase from Pectobacterium atrosepticum (strain SCRI 1043 / ATCC BAA-672) (Erwinia carotovora subsp. atroseptica).